The following is a 250-amino-acid chain: Small ribosomal subunit protein uS2 (250 aa).

The protein belongs to the universal ribosomal protein uS2 family.

In Paraburkholderia phymatum (strain DSM 17167 / CIP 108236 / LMG 21445 / STM815) (Burkholderia phymatum), this protein is Small ribosomal subunit protein uS2.